The chain runs to 628 residues: Chaperone protein DnaK (628 aa).

A Phosphothreonine; by autocatalysis modification is found at threonine 197. Basic and acidic residues predominate over residues 595–604 (AEAMYKKEQG). The segment at 595 to 628 (AEAMYKKEQGEQAGAQPNQKAKKDDDDVIDAEVE) is disordered.

The protein belongs to the heat shock protein 70 family.

Functionally, acts as a chaperone. This Aliarcobacter butzleri (strain RM4018) (Arcobacter butzleri) protein is Chaperone protein DnaK.